A 121-amino-acid polypeptide reads, in one-letter code: Small ribosomal subunit protein uS13 (121 aa).

Residues 93 to 121 (RGLPVRGQNTKNNARTRKGPRRTVANKKK) form a disordered region. A compositionally biased stretch (basic residues) spans 106–121 (ARTRKGPRRTVANKKK).

The protein belongs to the universal ribosomal protein uS13 family. Part of the 30S ribosomal subunit. Forms a loose heterodimer with protein S19. Forms two bridges to the 50S subunit in the 70S ribosome.

Its function is as follows. Located at the top of the head of the 30S subunit, it contacts several helices of the 16S rRNA. In the 70S ribosome it contacts the 23S rRNA (bridge B1a) and protein L5 of the 50S subunit (bridge B1b), connecting the 2 subunits; these bridges are implicated in subunit movement. Contacts the tRNAs in the A and P-sites. The chain is Small ribosomal subunit protein uS13 from Bacillus pumilus (strain SAFR-032).